The sequence spans 311 residues: Inositol oxygenase 1 (311 aa).

The segment covering 1–11 (MTILIDRHSDQ) has biased composition (basic and acidic residues). A disordered region spans residues 1–29 (MTILIDRHSDQNDAGDEIVEKNQGNGKEE). Substrate is bound by residues Arg-52 and 109–111 (DES). His-122, His-147, and Asp-148 together coordinate Fe cation. Substrate contacts are provided by residues Lys-151 and 168 to 169 (GD). Residues His-220, His-246, and Asp-279 each contribute to the Fe cation site. 246–247 (HS) is a substrate binding site.

This sequence belongs to the myo-inositol oxygenase family. Fe cation serves as cofactor. As to expression, expressed in roots, young leaves, stems, flowers and siliques.

It is found in the cytoplasm. It carries out the reaction myo-inositol + O2 = D-glucuronate + H2O + H(+). It functions in the pathway polyol metabolism; myo-inositol degradation into D-glucuronate; D-glucuronate from myo-inositol: step 1/1. Its function is as follows. Catalyzes the oxygenative cleavage of myo-inositol to D-glucuronate. Involved in the biosynthesis of UDP-glucuronic acid (UDP-GlcA), providing nucleotide sugars for cell-wall polymers. May be also involved in plant ascorbate biosynthesis. The protein is Inositol oxygenase 1 (MIOX1) of Arabidopsis thaliana (Mouse-ear cress).